Reading from the N-terminus, the 760-residue chain is General transcription and DNA repair factor IIH helicase subunit XPD (760 aa).

The Helicase ATP-binding domain occupies 7–283; that stretch reads GLLVYFPYDY…KETDEQRLRE (277 aa). 42-49 serves as a coordination point for ATP; it reads MPSGTGKT. Residues cysteine 116, cysteine 134, cysteine 155, and cysteine 190 each coordinate [4Fe-4S] cluster. Residues 234–237 carry the DEAH box motif; the sequence is DEAH. Residues 438–637 form a mediates interaction with MMS19 region; that stretch reads MDASLAIKPV…TQSRILKARL (200 aa). Positions 682–695 match the Nuclear localization signal motif; that stretch reads KRFARADKRGKLPR.

This sequence belongs to the helicase family. RAD3/XPD subfamily. In terms of assembly, component of the 7-subunit TFIIH core complex composed of XPB/ERCC3, XPD/ERCC2, GTF2H1, GTF2H2, GTF2H3, GTF2H4 and GTF2H5, which is active in NER. The core complex associates with the 3-subunit CDK-activating kinase (CAK) module composed of CCNH/cyclin H, CDK7 and MNAT1 to form the 10-subunit holoenzyme (holo-TFIIH) active in transcription. The interaction with GTF2H2 results in the stimulation of the 5'--&gt;3' helicase activity. Component of the MMXD complex, which includes CIAO1, ERCC2, CIAO2B, MMS19 and SLC25A5. Interacts with CIAO1 and CIAO2B; the interaction WITH CIAO2B is direct. Interacts with ATF7IP. Interacts directly with MMS19. Part of TBP-based Pol II pre-initiation complex (PIC), in which Pol II core assembles with general transcription factors and other specific initiation factors including GTF2E1, GTF2E2, GTF2F1, GTF2F2, TCEA1, ERCC2, ERCC3, GTF2H2, GTF2H3, GTF2H4, GTF2H5, GTF2A1, GTF2A2, GTF2B and TBP; this large multi-subunit PIC complex mediates DNA unwinding and targets Pol II core to the transcription start site where the first phosphodiester bond forms. Requires Mg(2+) as cofactor. It depends on [4Fe-4S] cluster as a cofactor. Post-translationally, ISGylated.

The protein resides in the nucleus. It is found in the cytoplasm. The protein localises to the cytoskeleton. Its subcellular location is the spindle. The enzyme catalyses Couples ATP hydrolysis with the unwinding of duplex DNA at the replication fork by translocating in the 5'-3' direction. This creates two antiparallel DNA single strands (ssDNA). The leading ssDNA polymer is the template for DNA polymerase III holoenzyme which synthesizes a continuous strand.. It catalyses the reaction ATP + H2O = ADP + phosphate + H(+). Its function is as follows. ATP-dependent 5'-3' DNA helicase, component of the general transcription and DNA repair factor IIH (TFIIH) core complex, which is involved in general and transcription-coupled nucleotide excision repair (NER) of damaged DNA and, when complexed to CDK-activating kinase (CAK), involved in transcription by RNA polymerase II. In NER, TFIIH acts by opening DNA around the lesion to allow the excision of the damaged oligonucleotide and its replacement by a new DNA fragment. The ATP-dependent helicase activity of XPD/ERCC2 is required for DNA opening. In transcription, TFIIH has an essential role in transcription initiation. When the pre-initiation complex (PIC) has been established, TFIIH is required for promoter opening and promoter escape. Phosphorylation of the C-terminal tail (CTD) of the largest subunit of RNA polymerase II by the kinase module CAK controls the initiation of transcription. XPD/ERCC2 acts by forming a bridge between CAK and the core-TFIIH complex. Involved in the regulation of vitamin-D receptor activity. As part of the mitotic spindle-associated MMXD complex it plays a role in chromosome segregation. Might have a role in aging process and could play a causative role in the generation of skin cancers. The protein is General transcription and DNA repair factor IIH helicase subunit XPD (ERCC2) of Bos taurus (Bovine).